We begin with the raw amino-acid sequence, 388 residues long: F-box/kelch-repeat protein At3g17530 (388 aa).

One can recognise an F-box domain in the interval 1 to 50 (MMISDLPHDLESEILSRVPAKSLAKWKTTCKRWYALFRDPSFVKKNFDKA). Kelch repeat units follow at residues 163–208 (CCYY…VSLK) and 336–383 (RIYI…AEEN).

In Arabidopsis thaliana (Mouse-ear cress), this protein is F-box/kelch-repeat protein At3g17530.